Consider the following 124-residue polypeptide: Ribonuclease pancreatic (124 aa).

Residues 1 to 13 are compositionally biased toward basic and acidic residues; that stretch reads KESAAAKFERQHM. The segment at 1–24 is disordered; that stretch reads KESAAAKFERQHMDSSTSSASSSN. The substrate site is built by Lys-7 and Arg-10. The active-site Proton acceptor is His-12. 4 disulfides stabilise this stretch: Cys-26–Cys-84, Cys-40–Cys-95, Cys-58–Cys-110, and Cys-65–Cys-72. Asn-34 is a glycosylation site (N-linked (GlcNAc...) asparagine; partial). Residues 41–45, Lys-66, and Arg-85 contribute to the substrate site; that span reads KPVNT. The active-site Proton donor is His-119.

It belongs to the pancreatic ribonuclease family. In terms of assembly, monomer. Interacts with and forms tight 1:1 complexes with RNH1. Dimerization of two such complexes may occur. Interaction with RNH1 inhibits this protein. In terms of tissue distribution, pancreas.

It is found in the secreted. The catalysed reaction is an [RNA] containing cytidine + H2O = an [RNA]-3'-cytidine-3'-phosphate + a 5'-hydroxy-ribonucleotide-3'-[RNA].. It catalyses the reaction an [RNA] containing uridine + H2O = an [RNA]-3'-uridine-3'-phosphate + a 5'-hydroxy-ribonucleotide-3'-[RNA].. In terms of biological role, endonuclease that catalyzes the cleavage of RNA on the 3' side of pyrimidine nucleotides. Acts on single-stranded and double-stranded RNA. In Aepyceros melampus (Impala), this protein is Ribonuclease pancreatic (RNASE1).